Consider the following 443-residue polypeptide: Thymidine phosphorylase (443 aa).

It belongs to the thymidine/pyrimidine-nucleoside phosphorylase family. As to quaternary structure, homodimer.

It catalyses the reaction thymidine + phosphate = 2-deoxy-alpha-D-ribose 1-phosphate + thymine. Its pathway is pyrimidine metabolism; dTMP biosynthesis via salvage pathway; dTMP from thymine: step 1/2. In terms of biological role, the enzymes which catalyze the reversible phosphorolysis of pyrimidine nucleosides are involved in the degradation of these compounds and in their utilization as carbon and energy sources, or in the rescue of pyrimidine bases for nucleotide synthesis. This Shewanella loihica (strain ATCC BAA-1088 / PV-4) protein is Thymidine phosphorylase.